A 134-amino-acid polypeptide reads, in one-letter code: uncharacterized protein (134 aa).

Positions 1–16 are cleaved as a signal peptide; the sequence is MAKAVALLLAAIAASA.

This is an uncharacterized protein from Oryza sativa subsp. indica (Rice).